The sequence spans 542 residues: Major facilitator superfamily transporter mfsA (542 aa).

Transmembrane regions (helical) follow at residues 19-39 (FAAV…AGLL), 70-90 (GAVT…SMFC), 99-119 (LIFM…VCYT), 127-149 (FVIG…PVWQ), 160-180 (FLVC…YWVV), 194-214 (FPVA…LMLP), 321-341 (IMGG…FFMI), 349-369 (LYLI…ACLI), 380-400 (AVGI…LPWI), 413-432 (VGAS…VVMF), and 444-464 (VYLF…FFYV).

Belongs to the major facilitator superfamily. Sugar transporter (TC 2.A.1.1) family.

It localises to the membrane. Its function is as follows. Major facilitator superfamily transporter that may be involved in A.fumigatus adaptation to azoles such as vorizonazole. This is Major facilitator superfamily transporter mfsA from Aspergillus fumigatus (strain ATCC MYA-4609 / CBS 101355 / FGSC A1100 / Af293) (Neosartorya fumigata).